A 96-amino-acid chain; its full sequence is Xylulose kinase (96 aa).

Residue 71–72 (QH) participates in substrate binding.

It belongs to the FGGY kinase family.

The catalysed reaction is D-xylulose + ATP = D-xylulose 5-phosphate + ADP + H(+). Catalyzes the phosphorylation of D-xylulose to D-xylulose 5-phosphate. This Arthrobacter sp. (strain NRRL B3728) protein is Xylulose kinase.